Consider the following 535-residue polypeptide: Dual specificity calcium/calmodulin-dependent 3',5'-cyclic nucleotide phosphodiesterase 1A (535 aa).

Calmodulin-binding stretches follow at residues 24–44 and 114–137; these read TEKM…QLER and EKPK…MYRK. Positions 142 to 522 constitute a PDEase domain; the sequence is VGLAYPAAVI…ERWKELAAQE (381 aa). The active-site Proton donor is the H219. Zn(2+) contacts are provided by H223, H259, D260, and D366. Residue D260 coordinates Mg(2+).

The protein belongs to the cyclic nucleotide phosphodiesterase family. PDE1 subfamily. As to quaternary structure, homodimer. Interacts with YWHAZ. It depends on Zn(2+) as a cofactor. Requires Mg(2+) as cofactor. As to expression, several tissues, including brain, kidney, testes and heart.

The enzyme catalyses a nucleoside 3',5'-cyclic phosphate + H2O = a nucleoside 5'-phosphate + H(+). The catalysed reaction is 3',5'-cyclic GMP + H2O = GMP + H(+). It carries out the reaction 3',5'-cyclic AMP + H2O = AMP + H(+). With respect to regulation, type I PDE are activated by the binding of calmodulin in the presence of Ca(2+). Calcium/calmodulin-dependent cyclic nucleotide phosphodiesterase with a dual specificity for the second messengers cGMP and cAMP, which are key regulators of many important physiological processes. Has a higher efficiency with cGMP compared to cAMP. In Homo sapiens (Human), this protein is Dual specificity calcium/calmodulin-dependent 3',5'-cyclic nucleotide phosphodiesterase 1A.